Reading from the N-terminus, the 462-residue chain is Sugar transporter ERD6-like 2 (462 aa).

12 helical membrane passes run 23–43 (SGLL…GCAM), 70–90 (VMTL…ALVG), 96–116 (WISD…HDII), 123–143 (LFLG…IAEI), 156–176 (NQLL…FFHW), 178–198 (TLAL…FFIP), 261–281 (LIIG…AISA), 296–316 (IGTT…MLTV), 324–344 (LLMI…LSYY), 357–377 (VMLI…LGGL), 397–417 (LVTM…NFMI), and 423–443 (GTYF…WTLV).

Belongs to the major facilitator superfamily. Sugar transporter (TC 2.A.1.1) family.

The protein resides in the membrane. Its function is as follows. Sugar transporter. This chain is Sugar transporter ERD6-like 2 (SUGTL3), found in Arabidopsis thaliana (Mouse-ear cress).